Consider the following 504-residue polypeptide: MPTVEELYRNYGILADATEQVGQHKDAYQVILDGVKGGTKEKRLAAQFIPKFFKHFPELADSAINAQLDLCEDEDVSIRRQAIKELPQFATGENLPRVADILTQLLQTDDSAEFNLVNNALLSIFKMDAKGTLGGLFSQILQGEDIVRERAIKFLSTKLKTLPDEVLTKEVEELILTESKKVLEDVTGEEFVLFMKILSGLKSLQTVSGRQQLVELVAEQADLEQAFSPSDPDCVDRLLQCTRQAVPLFSKNVHSTRFVTYFCEQVLPNLSTLTTPVEGLDIQLEVLKLLAEMSSFCGDMEKLETNLRKLFDKLLEYMPLPPEEAENGENAGNEEPKLQFSYVECLLYSFHQLGRKLPDFLTAKLNAEKLKDFKIRLQYFARGLQVYIRQLRLALQGKTGEALKTEENKIKVVALKITNNINVLIKDLFHIPPSYKSTVTLSWKPVQKVEIGQKRTSEDTSSGSPPKKSPGGPKRDARQIYNPPSGKYSSNLSNFNYERSLQGK.

An ARM-like and Heat-like helical repeats region spans residues 1-360 (MPTVEELYRN…HQLGRKLPDF (360 aa)). The residue at position 251 (Lys-251) is an N6-acetyllysine. Residues 370–391 (LKDFKIRLQYFARGLQVYIRQL) form a leucine-zipper region. At Thr-399 the chain carries Phosphothreonine. The disordered stretch occupies residues 452–504 (GQKRTSEDTSSGSPPKKSPGGPKRDARQIYNPPSGKYSSNLSNFNYERSLQGK). Positions 454–475 (KRTSEDTSSGSPPKKSPGGPKR) match the Nuclear localization signal motif. The span at 461–472 (SSGSPPKKSPGG) shows a compositional bias: low complexity. Phosphoserine is present on residues Ser-462, Ser-464, and Ser-469. Residues 487–504 (KYSSNLSNFNYERSLQGK) are compositionally biased toward polar residues.

The protein belongs to the API5 family. In terms of assembly, monomer. Interacts with FGF2 and ACIN1. Acetylation at Lys-251 impairs antiapoptotic function.

Its subcellular location is the nucleus. It is found in the cytoplasm. Antiapoptotic factor that may have a role in protein assembly. Negatively regulates ACIN1. By binding to ACIN1, it suppresses ACIN1 cleavage from CASP3 and ACIN1-mediated DNA fragmentation. Also known to efficiently suppress E2F1-induced apoptosis. This chain is Apoptosis inhibitor 5 (Api5), found in Mus musculus (Mouse).